A 283-amino-acid chain; its full sequence is Plasma membrane ascorbate-dependent reductase CYBRD1 (283 aa).

At 1-5 the chain is on the cytoplasmic side; that stretch reads MEGYK. Residues 6–30 form a helical membrane-spanning segment; that stretch reads SFLAFLVSSLLLGFLGVIFTLVWVL. One can recognise a Cytochrome b561 domain in the interval 13 to 218; that stretch reads SSLLLGFLGV…FGGLVVWMVT (206 aa). Residues 31-45 are Extracellular-facing; sequence HWREGLGWDGGAAEF. Residues 46-67 traverse the membrane as a helical segment; the sequence is NWHPVLVTSGFIFIQGIAIIVY. 3 residues coordinate heme b: His48, Arg68, and Lys77. Residues 68-76 lie on the Cytoplasmic side of the membrane; sequence RLPWTWKCS. Residues Lys77 and Lys81 each contribute to the L-ascorbate site. The chain crosses the membrane as a helical span at residues 77-103; that stretch reads KLLMKFIHAGLHLTALIFTIVALVAVF. Residue His84 coordinates heme b. At 104–116 the chain is on the extracellular side; it reads DFHNAKNIPNMYS. His106 contributes to the Fe(3+) binding site. Heme b-binding positions include 113–116 and His118; that span reads NMYS. The chain crosses the membrane as a helical span at residues 117 to 142; the sequence is LHSWIGLTVVILYALQLVLGVSIYLL. The Cytoplasmic portion of the chain corresponds to 143–149; that stretch reads PFASNTL. Position 150 (Arg150) interacts with L-ascorbate. A helical membrane pass occupies residues 150 to 177; the sequence is RAALMPVHVYSGLFIFGTVIATALMGIT. Heme b contacts are provided by His157 and Glu178. Residues 178-195 lie on the Extracellular side of the membrane; sequence EKLIFSLKEPPYSKLPPE. A helical transmembrane segment spans residues 196–220; that stretch reads AIFVNTFGLLILVFGGLVVWMVTTP. The Cytoplasmic segment spans residues 221–283; that stretch reads AWKRPREQGM…LDEAGQRSTM (63 aa). Position 223 (Lys223) interacts with heme b. The segment at 234-262 is disordered; sequence SPTVSSPDETEEGSTITDCSNTEKSDVEL. Residues 235-253 are compositionally biased toward polar residues; sequence PTVSSPDETEEGSTITDCS.

In terms of assembly, homodimer. It depends on heme b as a cofactor.

The protein resides in the cell membrane. It localises to the apical cell membrane. The catalysed reaction is Fe(3+)(out) + L-ascorbate(in) = monodehydro-L-ascorbate radical(in) + Fe(2+)(out) + H(+). It catalyses the reaction Cu(2+)(out) + L-ascorbate(in) = Cu(+)(out) + monodehydro-L-ascorbate radical(in) + H(+). It carries out the reaction monodehydro-L-ascorbate radical(out) + L-ascorbate(in) = monodehydro-L-ascorbate radical(in) + L-ascorbate(out). Plasma membrane reductase that uses cytoplasmic ascorbate as an electron donor to reduce extracellular Fe(3+) into Fe(2+). It is also able to reduce extracellular monodehydro-L-ascorbate and may be involved in extracellular ascorbate regeneration. May also function as a cupric transmembrane reductase. The polypeptide is Plasma membrane ascorbate-dependent reductase CYBRD1 (cybrd1) (Xenopus laevis (African clawed frog)).